The chain runs to 99 residues: U2-theraphotoxin-Lsp1a (99 aa).

An N-terminal signal peptide occupies residues 1 to 22; sequence MNTIQVIIFAVVLVLTVTVGQA. Positions 23 to 57 are excised as a propeptide; the sequence is DEDSPEASLLRKLKEAEASLFGQNLEESRNSRQKR. Disulfide bonds link C58–C73, C65–C78, and C72–C93.

It belongs to the neurotoxin 14 (magi-1) family. 08 (Ltx-4) subfamily. Expressed by the venom gland.

It localises to the secreted. Insecticidal neurotoxin. The sequence is that of U2-theraphotoxin-Lsp1a from Lasiodora sp. (strain IBSP 8539) (Brazilian salmon pink birdeater).